A 307-amino-acid chain; its full sequence is Serine/threonine-protein phosphatase 4 catalytic subunit (307 aa).

N-acetylalanine is present on A2. Mn(2+) is bound by residues D54, H56, D82, and N114. H115 (proton donor) is an active-site residue. The Mn(2+) site is built by H164 and H238. L307 is subject to Leucine methyl ester.

The protein belongs to the PPP phosphatase family. PP-4 (PP-X) subfamily. Serine/threonine-protein phosphatase 4 (PP4) occurs in different assemblies of the catalytic and one or more regulatory subunits. Component of the PP4 complexes PPP4C-PPP4R1, PPP4C-PPP4R2, PPP4C-PPP4R2-PPP4R3A, PPP4C-PPP4R2-PPP4R3B and PPP4C-PPP4R4. The PPP4C-PPP4R2 complex appears to be a tetramer composed of 2 molecules of PPP4C and 2 molecules of PPP4R2. Interacts with REL, NFKB1/p50 and RELA. Interacts with SMN1 and GEMIN4. Interacts with IRS4 (phosphorylated). Interacts with SMEK1/PPP4R3A; the interaction requires PP4R2. Interacts with HDAC3. Requires Mn(2+) as cofactor. Methylation at the C-terminal Leu-307 is critical for interactions with regulatory subunits and functions in DNA repair.

The protein localises to the cytoplasm. It is found in the nucleus. The protein resides in the cytoskeleton. Its subcellular location is the microtubule organizing center. It localises to the centrosome. The catalysed reaction is O-phospho-L-seryl-[protein] + H2O = L-seryl-[protein] + phosphate. It carries out the reaction O-phospho-L-threonyl-[protein] + H2O = L-threonyl-[protein] + phosphate. Its function is as follows. Protein phosphatase that is involved in many processes such as microtubule organization at centrosomes, maturation of spliceosomal snRNPs, apoptosis, DNA repair, tumor necrosis factor (TNF)-alpha signaling, activation of c-Jun N-terminal kinase MAPK8, regulation of histone acetylation, DNA damage checkpoint signaling, NF-kappa-B activation and cell migration. The PPP4C-PPP4R1 PP4 complex may play a role in dephosphorylation and regulation of HDAC3. The PPP4C-PPP4R2-PPP4R3A PP4 complex specifically dephosphorylates H2AX phosphorylated on Ser-140 (gamma-H2AX) generated during DNA replication and required for DNA double strand break repair. Dephosphorylates NDEL1 at CDK1 phosphorylation sites and negatively regulates CDK1 activity in interphase. In response to DNA damage, catalyzes RPA2 dephosphorylation, an essential step for DNA repair since it allows the efficient RPA2-mediated recruitment of RAD51 to chromatin. This is Serine/threonine-protein phosphatase 4 catalytic subunit (PPP4C) from Homo sapiens (Human).